Here is an 89-residue protein sequence, read N- to C-terminus: Small ribosomal subunit protein uS17 (89 aa).

It belongs to the universal ribosomal protein uS17 family. In terms of assembly, part of the 30S ribosomal subunit.

Its function is as follows. One of the primary rRNA binding proteins, it binds specifically to the 5'-end of 16S ribosomal RNA. In Xylella fastidiosa (strain M12), this protein is Small ribosomal subunit protein uS17.